We begin with the raw amino-acid sequence, 109 residues long: Cell division protein ZapA (109 aa).

Residues 21-99 (PEQQDALNQA…IEQALLEQGR (79 aa)) adopt a coiled-coil conformation.

The protein belongs to the ZapA family. Type 1 subfamily. In terms of assembly, homodimer. Interacts with FtsZ.

Its subcellular location is the cytoplasm. In terms of biological role, activator of cell division through the inhibition of FtsZ GTPase activity, therefore promoting FtsZ assembly into bundles of protofilaments necessary for the formation of the division Z ring. It is recruited early at mid-cell but it is not essential for cell division. In Pectobacterium carotovorum subsp. carotovorum (strain PC1), this protein is Cell division protein ZapA.